The chain runs to 1534 residues: Dicer-like protein 1 (1534 aa).

The tract at residues 36–70 is disordered; sequence PSAEPGVEHDQISPGESDEEIEENISDQNNSSSQK. The segment covering 51 to 60 has biased composition (acidic residues); sequence ESDEEIEENI. The Helicase ATP-binding domain occupies 130–311; sequence LFERAKAQNT…AAATRLETLL (182 aa). 143-150 serves as a coordination point for ATP; that stretch reads LDTGSGKT. Residues 256–259 carry the DEAH box motif; the sequence is DEAH. Residues 456 to 613 form the Helicase C-terminal domain; that stretch reads ELSKHFSHAP…FCETLPEDRI (158 aa). The 91-residue stretch at 648–738 folds into the Dicer dsRNA-binding fold domain; sequence AIAILARYAS…KSIYHKRLPA (91 aa). Residues 888–1016 enclose the PAZ domain; that stretch reads KTVTFVQEND…ICAEPLKISA (129 aa). RNase III domains lie at 1054–1199 and 1250–1402; these read SDYA…LSGG and ALQV…VDSD. Mg(2+) is bound by residues Glu-1291, Asp-1388, and Glu-1391. The DRBM domain occupies 1436–1504; it reads TFLHNRLANE…SERALVVLDG (69 aa). Residues Cys-1448, His-1475, Cys-1516, and Cys-1518 each contribute to the Zn(2+) site.

Belongs to the helicase family. Dicer subfamily. Mg(2+) is required as a cofactor. Requires Mn(2+) as cofactor.

Dicer-like endonuclease involved in cleaving double-stranded RNA in the RNA interference (RNAi) pathway. Produces 21 to 25 bp dsRNAs (siRNAs) which target the selective destruction of homologous RNAs leading to sequence-specific suppression of gene expression, called post-transcriptional gene silencing (PTGS). Part of a broad host defense response against viral infection and transposons. The chain is Dicer-like protein 1 (dcl1) from Aspergillus clavatus (strain ATCC 1007 / CBS 513.65 / DSM 816 / NCTC 3887 / NRRL 1 / QM 1276 / 107).